The primary structure comprises 377 residues: MKAVGMVVEYNPFHNGHRYHLQQAKKISEADVTVAVMSGNFTQRGEPTIVDKWSRARAAVMNGVDLVIELPLFYAVQPAHRFAGGALSLLNALGVDSIVFGSEHPEWDFARLVKAEEAFNQESFNKYNATYATQFNQQLKEQTGVTLIDPNDILAFAYTKAKINQGYHFELLPIKRQGSNYHDQQIKGKIASASAIRQAISEKGDYRQAVPQVMGDILATIKSIPLWTELYPLLRNQLIQAPVSTLQSTYLMAEGLEYRMKEAAQRSLDFNSFMKFTKTKRYTYAHLLRVCLYTILQITQEEVEKHSKHPYLHVLAFNKQGREYLHEVKKELALPLITKVDQEMRDQLLNLDYRAGKLYQLFTPVEQDLKHPPIIIN.

Residues 7–20, Gly101, Asn151, and Arg176 contribute to the ATP site; that span reads VVEYNPFHNGHRYH.

Belongs to the TmcAL family.

Its subcellular location is the cytoplasm. The catalysed reaction is cytidine(34) in elongator tRNA(Met) + acetate + ATP = N(4)-acetylcytidine(34) in elongator tRNA(Met) + AMP + diphosphate. Functionally, catalyzes the formation of N(4)-acetylcytidine (ac(4)C) at the wobble position of elongator tRNA(Met), using acetate and ATP as substrates. First activates an acetate ion to form acetyladenylate (Ac-AMP) and then transfers the acetyl group to tRNA to form ac(4)C34. The polypeptide is tRNA(Met) cytidine acetate ligase (Limosilactobacillus reuteri (strain DSM 20016) (Lactobacillus reuteri)).